A 641-amino-acid chain; its full sequence is Calpain-6 (641 aa).

Positions 26–343 constitute a Calpain catalytic domain; that stretch reads LFCDPTFLPE…FHKLNVCRNV (318 aa). The domain III stretch occupies residues 344-495; the sequence is NNPIFGRKEL…IFSEVPVQLR (152 aa). The region spanning 498–621 is the C2 domain; that stretch reads TLDMPKMSCW…YLRKKGGPTA (124 aa).

The protein belongs to the peptidase C2 family. Interacts (via domain III) with microtubules. Interacts (via domain II) with ARHGEF2 (via the N-terminal zinc finger). In terms of tissue distribution, expressed only in placenta.

It is found in the cytoplasm. It localises to the perinuclear region. The protein resides in the cytoskeleton. Its subcellular location is the spindle. Microtubule-stabilizing protein that may be involved in the regulation of microtubule dynamics and cytoskeletal organization. May act as a regulator of RAC1 activity through interaction with ARHGEF2 to control lamellipodial formation and cell mobility. Does not seem to have protease activity as it has lost the active site residues. The protein is Calpain-6 (CAPN6) of Homo sapiens (Human).